The sequence spans 916 residues: MLTNIAKKIFGSRNDRLLKQYRKSVARINALEEQMQALSDADLQAKTAEFKQRLADGQTLDGILPEAFAVCREASRRVLGMRHFDVQLIGGMVLHDGKIAEMRTGEGKTLVATLAVYLNALAGKGVHVVTVNDYLASRDAGIMEPLYNFLGLTVGVIISDMQPFDRQNAYAADITYGTNNEFGFDYLRDNMVTDQYDKVQRELNFAVVDEVDSILIDEARTPLIISGQADDNIQLYQIMNTVPPHLVRQETEEGEGDYWVDEKAHQVILSETGHEHAEQILTQMGLLAENDSLYSAANISLMHHLMAALRAHSLFHKDQHYVIQDGEIVIVDEFTGRLMSGRRWSEGLHQAVEAKEGVEIKRENQTLASITFQNYFRLYTKLSGMTGTADTEAFEFQSIYNLETVIIPTNRPVQRKDFNDQIFRSAEEKFEAVVKDIEECHKRGQPVLVGTTSIENSELVSRLLQKAGLPHNVLNAKEHEREALIVAQAGKVGAITVATNMAGRGTDIVLGGNLKHQTDAIRADETLSDEEKQAQIAALENGWQAEHDKVMEAGGLHIIGTERHESRRIDNQLRGRSGRQGDPGSSRFYLSFEDPLLRLFALDRAAAILNRLAPERGVAIEHNLLTRQIEGAQRKVEGRNFDMRKQVLEYDDVANEQRKVIYSQRNEILTSKDIGDLMQEIRSDAVSDLVDTYMPPDSMEEQWDIPTLENRLAAEFRLQEDIQSWLKADNAIDGQDIKERLIERIENEYAAKTELVGKQAMADFERNVMLQAIDNQWREHLAAMDYLRQGIHLRSYAQKNPKQEYKREAFTMFQDLWNGIKFHIASLLTSVQIEQNPVAAVEEQPVGNIQSIHSESPDIEELLGQSQTDLVTEAFNPDGTDFSPEALEARGQIVHRNDPCPCGSGLKYKQCHGKLA.

ATP is bound by residues Gln-87, 105–109 (GEGKT), and Asp-507. Positions 900, 902, 911, and 912 each coordinate Zn(2+).

Belongs to the SecA family. In terms of assembly, monomer and homodimer. Part of the essential Sec protein translocation apparatus which comprises SecA, SecYEG and auxiliary proteins SecDF-YajC and YidC. It depends on Zn(2+) as a cofactor.

The protein resides in the cell inner membrane. The protein localises to the cytoplasm. It carries out the reaction ATP + H2O + cellular proteinSide 1 = ADP + phosphate + cellular proteinSide 2.. Functionally, part of the Sec protein translocase complex. Interacts with the SecYEG preprotein conducting channel. Has a central role in coupling the hydrolysis of ATP to the transfer of proteins into and across the cell membrane, serving both as a receptor for the preprotein-SecB complex and as an ATP-driven molecular motor driving the stepwise translocation of polypeptide chains across the membrane. This is Protein translocase subunit SecA from Neisseria gonorrhoeae (strain NCCP11945).